Consider the following 434-residue polypeptide: APETALA2-like protein 2 (434 aa).

The interval 1-116 is disordered; sequence MLLDLNVESP…KTRRGPRSRS (116 aa). The segment covering 12–23 has biased composition (low complexity); the sequence is RSGTSSSSVLNS. Residues 25-38 show a composition bias toward gly residues; the sequence is DAGGGGGGGGGGGL. Pro residues predominate over residues 72–87; that stretch reads LPPPPPAAPSPAPAWQ. The segment covering 104-113 has biased composition (basic residues); it reads VAKKTRRGPR. Positions 106–115 match the Nuclear localization signal motif; it reads KKTRRGPRSR. 2 DNA-binding regions (AP2/ERF) span residues 118–174 and 210–267; these read QYRG…INFN and KFRG…TNFE. Residues 291–295 carry the EAR motif; the sequence is LDLRI.

It belongs to the AP2/ERF transcription factor family. AP2 subfamily. In terms of assembly, may form homodimer. Interacts with TPR2/ASP1. Highly expressed in developing panicles and in young seedlings. Present at low levels at all developmental stages.

Its subcellular location is the nucleus. Functionally, probable transcription factor. Involved in spikelet transition. Together with SNB, controls synergistically inflorescence architecture and floral meristem establishment via the regulation of spatio-temporal expression of B- and E-function floral organ identity genes in the lodicules and of spikelet meristem genes. Prevents lemma and palea elongation as well as grain growth. This is APETALA2-like protein 2 from Oryza sativa subsp. japonica (Rice).